Consider the following 192-residue polypeptide: Large ribosomal subunit protein uL18 (192 aa).

It belongs to the universal ribosomal protein uL18 family. Part of the 50S ribosomal subunit. Contacts the 5S and 23S rRNAs.

In terms of biological role, this is one of the proteins that bind and probably mediate the attachment of the 5S RNA into the large ribosomal subunit, where it forms part of the central protuberance. The chain is Large ribosomal subunit protein uL18 from Methanothermobacter thermautotrophicus (strain ATCC 29096 / DSM 1053 / JCM 10044 / NBRC 100330 / Delta H) (Methanobacterium thermoautotrophicum).